The primary structure comprises 353 residues: Guanine nucleotide-binding protein G(q) subunit alpha (353 aa).

S-palmitoyl cysteine attachment occurs at residues C3 and C4. The region spanning 32–353 (RELKLLLLGT…QLNLKEYNLV (322 aa)) is the G-alpha domain. Residues 35–48 (KLLLLGTGESGKST) are G1 motif. GTP contacts are provided by residues 40–47 (GTGESGKS), 174–180 (LRVRVPT), 199–203 (DVGGQ), 268–271 (NKKD), and A325. Mg(2+) contacts are provided by S47 and T180. Residues 172 to 180 (DILRVRVPT) form a G2 motif region. The G3 motif stretch occupies residues 195–204 (FRMVDVGGQR). Residues 264–271 (ILFLNKKD) are G4 motif. The G5 motif stretch occupies residues 323–328 (TCATDT).

Belongs to the G-alpha family. G(q) subfamily. G proteins are composed of 3 units; alpha, beta and gamma. The alpha chain contains the guanine nucleotide binding site.

Functionally, guanine nucleotide-binding proteins (G proteins) are involved as modulators or transducers in various transmembrane signaling systems. This chain is Guanine nucleotide-binding protein G(q) subunit alpha (SCGQA), found in Mizuhopecten yessoensis (Japanese scallop).